A 282-amino-acid chain; its full sequence is Pantothenate synthetase (282 aa).

Residue 30 to 37 (MGYLHEGH) coordinates ATP. Residue His-37 is the Proton donor of the active site. Position 61 (Gln-61) interacts with (R)-pantoate. Gln-61 contacts beta-alanine. 147–150 (GMKD) lines the ATP pocket. Position 153 (Gln-153) interacts with (R)-pantoate. Residues Val-176 and 184-187 (KSSR) each bind ATP.

It belongs to the pantothenate synthetase family. Homodimer.

Its subcellular location is the cytoplasm. It carries out the reaction (R)-pantoate + beta-alanine + ATP = (R)-pantothenate + AMP + diphosphate + H(+). The protein operates within cofactor biosynthesis; (R)-pantothenate biosynthesis; (R)-pantothenate from (R)-pantoate and beta-alanine: step 1/1. Its function is as follows. Catalyzes the condensation of pantoate with beta-alanine in an ATP-dependent reaction via a pantoyl-adenylate intermediate. The chain is Pantothenate synthetase from Bacillus anthracis (strain A0248).